The sequence spans 384 residues: Lipid-A-disaccharide synthase (384 aa).

It belongs to the LpxB family.

It carries out the reaction a lipid X + a UDP-2-N,3-O-bis[(3R)-3-hydroxyacyl]-alpha-D-glucosamine = a lipid A disaccharide + UDP + H(+). The protein operates within bacterial outer membrane biogenesis; LPS lipid A biosynthesis. Its function is as follows. Condensation of UDP-2,3-diacylglucosamine and 2,3-diacylglucosamine-1-phosphate to form lipid A disaccharide, a precursor of lipid A, a phosphorylated glycolipid that anchors the lipopolysaccharide to the outer membrane of the cell. In Cellvibrio japonicus (strain Ueda107) (Pseudomonas fluorescens subsp. cellulosa), this protein is Lipid-A-disaccharide synthase.